The chain runs to 214 residues: MNIILLGPPGAGKGTQSQRLVERHGMRQLSTGDMLRAAVKAQTPVGLKAKAVMDRGELVSDDIVSELIDAELTAMHGNVGAIFDGYPRTAAQAGQLDVILAKHDRSLDKVIELEVNEEALVDRITGRFTCAKCGTGYHDRHKQPAREGVCDVCGSTEFKRRPDDNEETVRTRMQEYRAKTAPILPIYEERGLVERVDGMGGIDEVTAAIDALLK.

Gly-10–Thr-15 provides a ligand contact to ATP. The segment at Ser-30–Val-59 is NMP. AMP contacts are provided by residues Thr-31, Arg-36, Glu-57–Val-59, Gly-85–Arg-88, and Gln-92. The tract at residues Gly-126 to Asp-163 is LID. Arg-127 contributes to the ATP binding site. 4 residues coordinate Zn(2+): Cys-130, Cys-133, Cys-150, and Cys-153. The AMP site is built by Arg-160 and Arg-172. Gly-200 contacts ATP.

The protein belongs to the adenylate kinase family. Monomer.

The protein localises to the cytoplasm. It catalyses the reaction AMP + ATP = 2 ADP. Its pathway is purine metabolism; AMP biosynthesis via salvage pathway; AMP from ADP: step 1/1. In terms of biological role, catalyzes the reversible transfer of the terminal phosphate group between ATP and AMP. Plays an important role in cellular energy homeostasis and in adenine nucleotide metabolism. The chain is Adenylate kinase from Erythrobacter litoralis (strain HTCC2594).